Reading from the N-terminus, the 204-residue chain is Urease accessory protein UreG (204 aa).

Position 12 to 19 (12 to 19 (GPVGSGKT)) interacts with GTP.

It belongs to the SIMIBI class G3E GTPase family. UreG subfamily. Homodimer. UreD, UreF and UreG form a complex that acts as a GTP-hydrolysis-dependent molecular chaperone, activating the urease apoprotein by helping to assemble the nickel containing metallocenter of UreC. The UreE protein probably delivers the nickel.

It is found in the cytoplasm. In terms of biological role, facilitates the functional incorporation of the urease nickel metallocenter. This process requires GTP hydrolysis, probably effectuated by UreG. In Pseudomonas aeruginosa (strain LESB58), this protein is Urease accessory protein UreG.